We begin with the raw amino-acid sequence, 166 residues long: Endoribonuclease YbeY (166 aa).

3 residues coordinate Zn(2+): His-132, His-136, and His-142.

It belongs to the endoribonuclease YbeY family. Zn(2+) is required as a cofactor.

The protein localises to the cytoplasm. Functionally, single strand-specific metallo-endoribonuclease involved in late-stage 70S ribosome quality control and in maturation of the 3' terminus of the 16S rRNA. The polypeptide is Endoribonuclease YbeY (Clostridium botulinum (strain Eklund 17B / Type B)).